The sequence spans 147 residues: Deoxyuridine 5'-triphosphate nucleotidohydrolase (147 aa).

R24 contributes to the Mg(2+) binding site. Residues P68 to S70, G82 to D85, Y88, G93, I95, and R111 each bind dUTP.

It belongs to the dUTPase family.

It carries out the reaction dUTP + H2O = dUMP + diphosphate + H(+). In terms of biological role, this enzyme is involved in nucleotide metabolism: it produces dUMP, the immediate precursor of thymidine nucleotides and it decreases the intracellular concentration of dUTP so that uracil cannot be incorporated into DNA. This chain is Deoxyuridine 5'-triphosphate nucleotidohydrolase (OPG046), found in Homo sapiens (Human).